The sequence spans 282 residues: Nucleotide-binding protein Fnod_1159 (282 aa).

Residue 9–16 coordinates ATP; sequence GHSGAGKS. 57 to 60 is a GTP binding site; that stretch reads DIRS.

The protein belongs to the RapZ-like family.

In terms of biological role, displays ATPase and GTPase activities. The polypeptide is Nucleotide-binding protein Fnod_1159 (Fervidobacterium nodosum (strain ATCC 35602 / DSM 5306 / Rt17-B1)).